The sequence spans 1340 residues: MNRTTPDQELAPASEPVWERPWSVEEIRRSSQSWSLAADAGLLQFLQEFSQQTISRTHEIKKQVDGLIRETKATDCRLHNVFNDFLMLSNTQFIENRVYDEEVEEPVLKAEAEKTEQEKTREQKEVDLIPKVQEAVNYGLQVLDSAFEQLDIKAGNSDSEEDDANGRVELILEPKDLYIDRPLPYLIGSKLFMEQEDVGLGELSSEEGSVGSDRGSIVDTEEEKEEEESDEDFAHHSDNDQNRNTTQMSDEEEDDDGCDLFADSEKEEEDIEDIEEITRPKRNGPTSFADELAARIKGDAVGRVDEEPTTLSSGEAKPRKTLKEKKERRTPSDDEEDNLFAPPKLTDEDFSPFGSGGGLFSGGKGLFDDEDEESDLFTEAPQDRQAGASVKEESSSSKPGKKIPAGAVSVFLGDTDVFGAASVPSLKEPQKPEQPTPRKSPYFPPPTGLFDDDDGDDDDDFFSTPHSKPSKTGKVQSTADIFGDDEGDLFKEKAVTLPEATVSQTDENKARAEKKVSLPSSKNLKPSSETKTQKGLFSDEEDSEDLFSSQSASKLKGAPLLPGKLPTSVSLFEDEDEEDNLFGGTAAKRQTLSLQAQGEEKAKASELSKKKASALLFSSDEEDQWNIPASQTHSASDSRSKGESRDSGTLQSQEAKAVKKASLFEEDEEDDLFAIAKDSQKKTQRVSLLFEDDVDSGGSLFGSPPTSVPPATTKKETVSEAPPLLFSDEEEKEAQLGVKPVDKKVESAKESLKFGRTDVAESEKEGLLTRSAQEAVKHSDLFSSSSPLDKGTKPRTKTVLSLFDEEEDKMEDQNTIQAPQKEVGKGRDPDARPKSTGVFQDEELLFSHKLQKDNDPDVDLFAGTKKTKLLEPSVGSLFGDDEDDDLFSSAKSQPLVQEKKRVVKKDYSVDSVKNQKHPETIQGIKEKGIWKPETPQDSSGLAPFKTKEPSTRIGKIQANLAINPAALLPTAASQISEVKPVLPELAFPSSEHRRSHGLESVPVLPGSGEAGVSFDLPAQADTLHSANKSRVKMRGKRRPQTRAARRLAAQESSEAEDMSVPRGPIAQWADGTISPNGHRPQLRAASGEDSTEEALAAAAAPWEGGPVPGVDRSPFAKSLGHSRGEADLFDSGDIFSTGTGSQSEERTKPKAKIAENLANPPVGGKAKSPMFPALGEASSDDDLFQSAKPKPAKKTNPFPLLEDEDDLFTDQKVKKNETKSDSQQDVISTTQDIFEDDIFATEAIKPSQKTREKEKTLESNLFDDNIDIFADLTVKPKEKSKKKVEAKSIFDDDMDDIFSSGIQAKTAKPKSRSAQAAPEPRFEHKVSNIFDDPLNAFGGQ.

The sufficient for interaction with WASHC3, WASHC4 and WASHC5; required for interaction with WASHC1 stretch occupies residues Met1 to Asp219. Phosphoserine occurs at positions 157, 159, 204, 205, and 209. Low complexity predominate over residues Gly201–Asp213. Residues Gly201–Pro404 are disordered. The segment covering Asp219–Glu231 has biased composition (acidic residues). Residues Asp232–Gln241 are compositionally biased toward basic and acidic residues. Composition is skewed to acidic residues over residues Ser249–Cys258 and Glu265–Glu275. Residue Ser287 is modified to Phosphoserine. Residues Leu292–Glu306 are compositionally biased toward basic and acidic residues. Thr330 is modified (phosphothreonine). A compositionally biased stretch (gly residues) spans Gly354–Gly365. The segment at Ser355–Glu599 is sufficient for interaction with CCDC93. The interaction with VPS35 stretch occupies residues Gly356–Gln1340. Residues Leu366 to Phe377 carry the LFa 1 motif. 2 positions are modified to phosphoserine: Ser394 and Ser396. Short sequence motifs (LFa) lie at residues Val410–Phe418, Leu449–Phe462, and Ile481–Phe490. 3 disordered regions span residues Ala421–Ala586, Ser618–Leu663, and Asp695–Val838. Residues Phe450 to Phe461 show a composition bias toward acidic residues. Residues Asp506 to Val516 show a composition bias toward basic and acidic residues. A compositionally biased stretch (low complexity) spans Ser517–Ser527. Short sequence motifs (LFa) lie at residues Leu536–Phe547, Leu571–Phe582, and Leu616–Pro628. Ser538 and Ser543 each carry phosphoserine. Residues Leu546–Pro566 show a composition bias toward low complexity. 2 positions are modified to phosphoserine: Ser618 and Ser619. The span at Ser636 to Asp646 shows a compositional bias: basic and acidic residues. 3 short sequence motifs (LFa) span residues Leu663–Phe673, Leu689–Phe701, and Leu725–Gly737. Phosphoserine is present on residues Ser727, Ser751, Ser786, and Ser801. The span at Pro740–Leu767 shows a compositional bias: basic and acidic residues. Residues Leu802–Ile816 carry the LFa 11 motif. A compositionally biased stretch (basic and acidic residues) spans Glu822–Pro833. 2 consecutive short sequence motifs (LFa) follow at residues Val838 to Phe846 and Asp855 to Phe861. Phosphoserine occurs at positions 873 and 876. The short motif at Leu877 to Phe887 is the LFa 14 element. Disordered stretches follow at residues Asp906 to Ser950 and Phe987 to Asp1205. Positions Lys916–Trp930 are enriched in basic and acidic residues. The interaction with phospholipids stretch occupies residues Gln936 to Gln1340. The span at Asn1027–Arg1045 shows a compositional bias: basic residues. Residues Lys1028 to Arg1046 form a required for interaction with F-actin-capping protein subunit alpha (CAPZA1 or CAPZA2 or CAPZA3) region. Ser1053 and Ser1086 each carry phosphoserine. Low complexity predominate over residues Glu1093–Gly1109. Ser1113 is modified (phosphoserine). 6 consecutive short sequence motifs (LFa) follow at residues Leu1128–Phe1135, Met1170–Phe1184, Leu1200–Phe1208, Ile1233–Phe1239, Leu1261–Phe1269, and Ile1289–Phe1298. Ser1178 and Ser1179 each carry phosphoserine. The disordered stretch occupies residues Gly1301 to Lys1325. Positions Ile1329 to Phe1337 match the LFa 21 motif.

This sequence belongs to the FAM21 family. Component of the WASH core complex also described as WASH regulatory complex (SHRC) composed of WASHC1, WASHC2, WASHC3, WASHC4 and WASHC5; in the complex interacts (via N-terminus) directly with WASHC1. The WASH core complex associates with the F-actin-capping protein dimer (formed by CAPZA1, CAPZA2 or CAPZA3 and CAPZB) in a transient or substoichiometric manner which was initially described as WASH complex. Interacts with VPS35; mediates the association with the retromer CSC complex. Interacts with FKBP15. Interacts with CCDC93, CCDC22, VPS35L; indicative for an association of the WASH core complex with the CCC and retriever complexes. Directly interacts with TBC1D23.

It localises to the early endosome membrane. It is found in the cell membrane. In terms of biological role, acts as a component of the WASH core complex that functions as a nucleation-promoting factor (NPF) at the surface of endosomes, where it recruits and activates the Arp2/3 complex to induce actin polymerization, playing a key role in the fission of tubules that serve as transport intermediates during endosome sorting. Mediates the recruitment of the WASH core complex to endosome membranes via binding to phospholipids and VPS35 of the retromer CSC. Mediates the recruitment of the F-actin-capping protein dimer to the WASH core complex probably promoting localized F-actin polymerization needed for vesicle scission. Via its C-terminus binds various phospholipids, most strongly phosphatidylinositol 4-phosphate (PtdIns-(4)P), phosphatidylinositol 5-phosphate (PtdIns-(5)P) and phosphatidylinositol 3,5-bisphosphate (PtdIns-(3,5)P2). Involved in the endosome-to-plasma membrane trafficking and recycling of SNX27-retromer-dependent cargo proteins, such as GLUT1. Required for the association of DNAJC13, ENTR1, ANKRD50 with retromer CSC subunit VPS35. Required for the endosomal recruitment of CCC and retriever complexes subunits COMMD1 and CCDC93 as well as the retrievere complex subunit VPS35L. The chain is WASH complex subunit 2 from Pongo abelii (Sumatran orangutan).